Here is a 45-residue protein sequence, read N- to C-terminus: uncharacterized protein (45 aa).

Positions 1–26 are enriched in basic and acidic residues; it reads MIMGKDRQEKKLKASGRVESDRDQSI. Residues 1 to 45 are disordered; the sequence is MIMGKDRQEKKLKASGRVESDRDQSIHYDGATSLEQNGRFKKRKS.

This is an uncharacterized protein from Bacillus subtilis (strain 168).